Here is a 506-residue protein sequence, read N- to C-terminus: Steroid (22S)-hydroxylase (506 aa).

The chain crosses the membrane as a helical span at residues 12–32; that stretch reads LLFFLPFILLALLTFYTTTVA. Cysteine 449 contributes to the heme binding site.

Belongs to the cytochrome P450 family. Heme is required as a cofactor. Highly expressed in roots and leaf blades. Expressed in shoot apex, stems, leaf sheaths, inflorescences and flowers.

The protein localises to the membrane. It carries out the reaction a C28-steroid + reduced [NADPH--hemoprotein reductase] + O2 = a (22S)-22-hydroxy C28-steroid + oxidized [NADPH--hemoprotein reductase] + H2O + H(+). The catalysed reaction is campesterol + reduced [NADPH--hemoprotein reductase] + O2 = (22S)-22-hydroxycampesterol + oxidized [NADPH--hemoprotein reductase] + H2O + H(+). The enzyme catalyses campestanol + reduced [NADPH--hemoprotein reductase] + O2 = 6-deoxycathasterone + oxidized [NADPH--hemoprotein reductase] + H2O + H(+). It functions in the pathway plant hormone biosynthesis; brassinosteroid biosynthesis. Functionally, catalyzes the C22-alpha-hydroxylation step in brassinosteroid biosynthesis, which is the rate-limiting step in this biosynthetic pathway. Catalyzes the conversion of campesterol (CR) to (22S)-22-hydroxycampesterol (22-OHCR, 22-hydroxyCR) and of campestanol (CN) to 6-deoxycathasterone (6-deoxoCT). Required for auxin responses involved in the regulation of epidermal cells length of the lamina joint. The chain is Steroid (22S)-hydroxylase from Oryza sativa subsp. japonica (Rice).